A 37-amino-acid chain; its full sequence is MKVRASVRKICEKCRVIKRRGRVMVICANPKHKQRQG.

Belongs to the bacterial ribosomal protein bL36 family.

The polypeptide is Large ribosomal subunit protein bL36 (Synechococcus elongatus (strain ATCC 33912 / PCC 7942 / FACHB-805) (Anacystis nidulans R2)).